The following is a 127-amino-acid chain: Large ribosomal subunit protein bL17 (127 aa).

The protein belongs to the bacterial ribosomal protein bL17 family. Part of the 50S ribosomal subunit. Contacts protein L32.

In Limosilactobacillus reuteri (strain DSM 20016) (Lactobacillus reuteri), this protein is Large ribosomal subunit protein bL17.